The sequence spans 346 residues: Anthranilate phosphoribosyltransferase (346 aa).

Residues Gly-80, 83–84, Thr-88, 90–93, 108–116, and Ser-120 each bind 5-phospho-alpha-D-ribose 1-diphosphate; these read GD, NIST, and KHGNTAVSS. Gly-80 contacts anthranilate. Ser-92 serves as a coordination point for Mg(2+). Asn-111 serves as a coordination point for anthranilate. Arg-166 contacts anthranilate. The Mg(2+) site is built by Asp-225 and Glu-226.

This sequence belongs to the anthranilate phosphoribosyltransferase family. As to quaternary structure, homodimer. It depends on Mg(2+) as a cofactor.

It carries out the reaction N-(5-phospho-beta-D-ribosyl)anthranilate + diphosphate = 5-phospho-alpha-D-ribose 1-diphosphate + anthranilate. Its pathway is amino-acid biosynthesis; L-tryptophan biosynthesis; L-tryptophan from chorismate: step 2/5. Functionally, catalyzes the transfer of the phosphoribosyl group of 5-phosphorylribose-1-pyrophosphate (PRPP) to anthranilate to yield N-(5'-phosphoribosyl)-anthranilate (PRA). The chain is Anthranilate phosphoribosyltransferase from Desulforudis audaxviator (strain MP104C).